The primary structure comprises 277 residues: Ras suppressor protein 1 (277 aa).

Residues 1 to 23 (MSKSLKKLVEESREKNQPEVDMS) form a disordered region. Residue S2 is modified to N-acetylserine. Positions 7–23 (KLVEESREKNQPEVDMS) are enriched in basic and acidic residues. LRR repeat units lie at residues 41–63 (HITQ…AELK), 64–85 (NLEV…ISSL), 87–108 (KLKH…FGSS), 110–133 (LLEV…FFYL), 135–156 (TLRA…IGKL), 158–179 (KLQI…IGEL), and 181–202 (QLKE…LGNL). The disordered stretch occupies residues 250–277 (MQANPEPPKKNNDKSKKISRKPLAAKNK). Residues 256–265 (PPKKNNDKSK) are compositionally biased toward basic and acidic residues.

Potentially plays a role in the Ras signal transduction pathway. Capable of suppressing v-Ras transformation in vitro. In Mus musculus (Mouse), this protein is Ras suppressor protein 1 (Rsu1).